A 62-amino-acid polypeptide reads, in one-letter code: Potassium channel toxin alpha-KTx Tx773 (62 aa).

The N-terminal stretch at 1–18 (MQKLFIVLLLFCILRLDA) is a signal peptide. 3 disulfides stabilise this stretch: cysteine 28–cysteine 46, cysteine 33–cysteine 59, and cysteine 37–cysteine 61.

Belongs to the short scorpion toxin superfamily. Potassium channel inhibitor family. Alpha-KTx 23 subfamily. Expressed by the venom gland.

The protein localises to the secreted. May block potassium channels. The chain is Potassium channel toxin alpha-KTx Tx773 from Buthus israelis (Israeli scorpion).